A 493-amino-acid chain; its full sequence is Chitobiosyldiphosphodolichol beta-mannosyltransferase (493 aa).

Over 1–71 the chain is Lumenal; that stretch reads MNRVAVVVLG…PISMSNSFKK (71 aa). Residues 72 to 92 traverse the membrane as a helical segment; sequence IPLISIFMWPLLAICKVLFQI. Over 93–109 the chain is Cytoplasmic; that stretch reads IQLMYVLLVKVPSPLNT. An intramembrane region (helical) is located at residues 110–130; that stretch reads ILVQSPPAIPTIFVMQIVCWI. Topologically, residues 131-493 are cytoplasmic; it reads RGVHLVIDWH…SSSNSKSKKD (363 aa). A disordered region spans residues 462-493; sequence FIPSSSSSSSSSSSSSSSSSSSSSSNSKSKKD. Low complexity predominate over residues 465-493; sequence SSSSSSSSSSSSSSSSSSSSSSNSKSKKD.

The protein belongs to the glycosyltransferase group 1 family. Glycosyltransferase 33 subfamily.

The protein resides in the endoplasmic reticulum membrane. The catalysed reaction is an N,N'-diacetylchitobiosyl-diphospho-di-trans,poly-cis-dolichol + GDP-alpha-D-mannose = a beta-D-Man-(1-&gt;4)-beta-D-GlcNAc-(1-&gt;4)-alpha-D-GlcNAc-diphospho-di-trans,poly-cis-dolichol + GDP + H(+). Its pathway is protein modification; protein glycosylation. In terms of biological role, participates in the formation of the lipid-linked precursor oligosaccharide for N-glycosylation. Involved in assembling the dolichol-pyrophosphate-GlcNAc(2)-Man(5) intermediate on the cytoplasmic surface of the ER. The sequence is that of Chitobiosyldiphosphodolichol beta-mannosyltransferase (alg1) from Dictyostelium discoideum (Social amoeba).